Here is a 100-residue protein sequence, read N- to C-terminus: Aspartyl/glutamyl-tRNA(Asn/Gln) amidotransferase subunit C (100 aa).

The protein belongs to the GatC family. As to quaternary structure, heterotrimer of A, B and C subunits.

It carries out the reaction L-glutamyl-tRNA(Gln) + L-glutamine + ATP + H2O = L-glutaminyl-tRNA(Gln) + L-glutamate + ADP + phosphate + H(+). The catalysed reaction is L-aspartyl-tRNA(Asn) + L-glutamine + ATP + H2O = L-asparaginyl-tRNA(Asn) + L-glutamate + ADP + phosphate + 2 H(+). Functionally, allows the formation of correctly charged Asn-tRNA(Asn) or Gln-tRNA(Gln) through the transamidation of misacylated Asp-tRNA(Asn) or Glu-tRNA(Gln) in organisms which lack either or both of asparaginyl-tRNA or glutaminyl-tRNA synthetases. The reaction takes place in the presence of glutamine and ATP through an activated phospho-Asp-tRNA(Asn) or phospho-Glu-tRNA(Gln). The chain is Aspartyl/glutamyl-tRNA(Asn/Gln) amidotransferase subunit C from Streptococcus pneumoniae serotype 19F (strain G54).